Here is a 124-residue protein sequence, read N- to C-terminus: Small ribosomal subunit protein uS13 (124 aa).

The segment at 94–124 (RGLPVRGQRTKTNARTRKGPKRTIAGKKKAR) is disordered.

The protein belongs to the universal ribosomal protein uS13 family. As to quaternary structure, part of the 30S ribosomal subunit. Forms a loose heterodimer with protein S19. Forms two bridges to the 50S subunit in the 70S ribosome.

Functionally, located at the top of the head of the 30S subunit, it contacts several helices of the 16S rRNA. In the 70S ribosome it contacts the 23S rRNA (bridge B1a) and protein L5 of the 50S subunit (bridge B1b), connecting the 2 subunits; these bridges are implicated in subunit movement. Contacts the tRNAs in the A and P-sites. This is Small ribosomal subunit protein uS13 from Mycolicibacterium vanbaalenii (strain DSM 7251 / JCM 13017 / BCRC 16820 / KCTC 9966 / NRRL B-24157 / PYR-1) (Mycobacterium vanbaalenii).